The sequence spans 340 residues: UDP-N-acetylenolpyruvoylglucosamine reductase (340 aa).

The FAD-binding PCMH-type domain occupies 14-185 (HVEATARWLL…VAVEFNLPLL (172 aa)). Residue Arg162 is part of the active site. Ser235 acts as the Proton donor in catalysis. The active site involves Glu332.

It belongs to the MurB family. Requires FAD as cofactor.

Its subcellular location is the cytoplasm. The catalysed reaction is UDP-N-acetyl-alpha-D-muramate + NADP(+) = UDP-N-acetyl-3-O-(1-carboxyvinyl)-alpha-D-glucosamine + NADPH + H(+). It participates in cell wall biogenesis; peptidoglycan biosynthesis. Cell wall formation. This is UDP-N-acetylenolpyruvoylglucosamine reductase from Xanthomonas oryzae pv. oryzae (strain KACC10331 / KXO85).